The chain runs to 956 residues: Calsyntenin-3 (956 aa).

The first 19 residues, 1–19, serve as a signal peptide directing secretion; sequence MTLLLLPLLLASLLASCSC. The Extracellular segment spans residues 20–847; that stretch reads NKANKHKPWI…SHRNSMIPSA (828 aa). Cadherin domains are found at residues 29 to 145 and 146 to 246; these read IEAE…APVF and VERL…KPSW. N-linked (GlcNAc...) asparagine glycans are attached at residues Asn-299, Asn-327, Asn-347, Asn-507, and Asn-740. Residues 848-868 form a helical membrane-spanning segment; it reads ATLIIVVCVGFLVLMVVLGLV. Residues 869–956 are Cytoplasmic-facing; the sequence is RIHSLHRRVS…RIIETPPHRY (88 aa). A disordered region spans residues 917–956; the sequence is ACVTGAVGGQQEDEDSSDSEVADSPSSDERRIIETPPHRY. The segment covering 927–937 has biased composition (acidic residues); the sequence is QEDEDSSDSEV. Over residues 943 to 956 the composition is skewed to basic and acidic residues; the sequence is SDERRIIETPPHRY.

Belongs to the calsyntenin family. As to quaternary structure, interacts (via cadherin domains) with both alpha and beta isoforms of neurexins (NRXN1, NRXN2 and NRXN3). Directly interacts with APBA2. Forms a tripartite complex with APBA2 and APP. Interacts with low affinity with KLC1. Interacts with SLC23A2/SVCT2. Proteolytically processed under normal cellular conditions. A primary zeta-cleavage generates a large extracellular (soluble) N-terminal domain (sAlc) and a short C-terminal transmembrane fragment (CTF1). A secondary cleavage catalyzed by gamma-secretase within the transmembrane domain releases the beta-Alc-beta chain in the extracellular milieu and produces an intracellular fragment (AlcICD). This processing is strongly suppressed in the tripartite complex formed with APBA2 and APP, which seems to prevent the association with gamma-secretase.

It localises to the postsynaptic cell membrane. The protein resides in the endoplasmic reticulum membrane. The protein localises to the golgi apparatus membrane. It is found in the cell projection. Its subcellular location is the dendrite. Its function is as follows. Postsynaptic adhesion molecule that binds to presynaptic neurexins to mediate both excitatory and inhibitory synapse formation. Promotes synapse development by acting as a cell adhesion molecule at the postsynaptic membrane, which associates with both neurexin-alpha and neurexin-beta proteins at the presynaptic membrane. Regulates the balance between excitatory and inhibitory synapses by inhibiting formation of excitatory parallel-fiber synapses and promoting formation of inhibitory synapses in the same neuron. May also be involved in ascorbate (vitamin C) uptake via its interaction with SLC23A2/SVCT2. Complex formation with APBA2 and APP, stabilizes APP metabolism and enhances APBA2-mediated suppression of beta-APP40 secretion, due to the retardation of intracellular APP maturation. In Pongo abelii (Sumatran orangutan), this protein is Calsyntenin-3 (CLSTN3).